Here is a 247-residue protein sequence, read N- to C-terminus: PF03932 family protein CutC (247 aa).

It belongs to the CutC family.

It localises to the cytoplasm. This is PF03932 family protein CutC from Klebsiella pneumoniae (strain 342).